The chain runs to 417 residues: N-acetylmuramoyl-L-alanine amidase AmiC (417 aa).

A signal peptide (tat-type signal) is located at residues 1 to 31 (MSGSNTAISRRRLLQGAGAMWLLSVSQVSLA). Positions 166-185 (LEKQVPPAQSGPQPGKAGRD) are disordered. The MurNAc-LAA domain maps to 190-404 (IMLDPGHGGE…VAESILAGIK (215 aa)).

The protein belongs to the N-acetylmuramoyl-L-alanine amidase 3 family. In terms of processing, predicted to be exported by the Tat system. The position of the signal peptide cleavage has not been experimentally proven.

It localises to the periplasm. It catalyses the reaction Hydrolyzes the link between N-acetylmuramoyl residues and L-amino acid residues in certain cell-wall glycopeptides.. Cell-wall hydrolase involved in septum cleavage during cell division. The protein is N-acetylmuramoyl-L-alanine amidase AmiC (amiC) of Escherichia coli O6:H1 (strain CFT073 / ATCC 700928 / UPEC).